A 490-amino-acid chain; its full sequence is Putative alanine aminotransferase (490 aa).

Residues Ala-157, Ser-158, Tyr-183, Asn-239, and Ser-308 each coordinate pyridoxal 5'-phosphate. Position 311 is an N6-(pyridoxal phosphate)lysine (Lys-311). Arg-320 contributes to the pyridoxal 5'-phosphate binding site.

Belongs to the class-I pyridoxal-phosphate-dependent aminotransferase family. Alanine aminotransferase subfamily. In terms of assembly, homodimer. It depends on pyridoxal 5'-phosphate as a cofactor.

The protein localises to the cytoplasm. It is found in the mitochondrion. It carries out the reaction L-alanine + 2-oxoglutarate = pyruvate + L-glutamate. The protein operates within amino-acid degradation; L-alanine degradation via transaminase pathway; pyruvate from L-alanine: step 1/1. Its function is as follows. Alanine aminotransferase involved in both alanine biosynthesis and utilization. In Schizosaccharomyces pombe (strain 972 / ATCC 24843) (Fission yeast), this protein is Putative alanine aminotransferase (alt1).